The chain runs to 235 residues: Protocatechuate 3,4-dioxygenase beta chain (235 aa).

4 residues coordinate Fe cation: Tyr-107, Tyr-146, His-159, and His-161.

Belongs to the intradiol ring-cleavage dioxygenase family. The enzyme is an oligomer of 12 copies of the alpha and beta chains. The cofactor is Fe(3+).

It carries out the reaction 3,4-dihydroxybenzoate + O2 = 3-carboxy-cis,cis-muconate + 2 H(+). The protein operates within aromatic compound metabolism; beta-ketoadipate pathway; 3-carboxy-cis,cis-muconate from 3,4-dihydroxybenzoate: step 1/1. Plays an essential role in the utilization of numerous aromatic and hydroaromatic compounds via the beta-ketoadipate pathway. The protein is Protocatechuate 3,4-dioxygenase beta chain (pcaH) of Burkholderia cepacia (Pseudomonas cepacia).